The sequence spans 299 residues: Streptogrisin-B (299 aa).

An N-terminal signal peptide occupies residues 1–38 (MRIKRTSNRSNAARRVRTTAVLAGLAAVAALAVPTANA). A propeptide spanning residues 39-114 (ETPRTFSANQ…ERTPGKFTKL (76 aa)) is cleaved from the precursor. C128 and C148 are joined by a disulfide. Active-site charge relay system residues include H147, D177, and S255. A disulfide bridge connects residues C249 and C276.

Belongs to the peptidase S1 family. Monomer.

It carries out the reaction Hydrolysis of proteins with trypsin-like specificity.. Functionally, has a primary specificity for large aliphatic or aromatic amino acids. The polypeptide is Streptogrisin-B (sprB) (Streptomyces griseus).